A 139-amino-acid chain; its full sequence is uncharacterized protein (139 aa).

The first 32 residues, 1–32 (MEFHDDKKNELQKKEEIITEAIDTLFQSSAFG), serve as a signal peptide directing secretion. Residues 44–139 (SSLKDVQTTI…TLFFPKNKHE (96 aa)) enclose the sHSP domain.

It belongs to the small heat shock protein (HSP20) family.

This is an uncharacterized protein from Bacillus subtilis (strain 168).